The chain runs to 126 residues: MFRTLLKSKIHRVAVTHCELHYEGSCAIDEDLLDAANIAENEQIHIWNINNGERFVTYAIKGERGSGMISVNGSAARRAAAGDLIIIAAFAQVHNDQVSAHEPQLVFVDDKNRQTELRHKVPTQRM.

Ser25 (schiff-base intermediate with substrate; via pyruvic acid) is an active-site residue. Ser25 is modified (pyruvic acid (Ser)). Substrate is bound at residue Thr57. Catalysis depends on Tyr58, which acts as the Proton donor. A substrate-binding site is contributed by 73–75 (GSA).

Belongs to the PanD family. In terms of assembly, heterooctamer of four alpha and four beta subunits. Pyruvate serves as cofactor. Is synthesized initially as an inactive proenzyme, which is activated by self-cleavage at a specific serine bond to produce a beta-subunit with a hydroxyl group at its C-terminus and an alpha-subunit with a pyruvoyl group at its N-terminus.

The protein resides in the cytoplasm. It catalyses the reaction L-aspartate + H(+) = beta-alanine + CO2. It functions in the pathway cofactor biosynthesis; (R)-pantothenate biosynthesis; beta-alanine from L-aspartate: step 1/1. Its function is as follows. Catalyzes the pyruvoyl-dependent decarboxylation of aspartate to produce beta-alanine. This chain is Aspartate 1-decarboxylase 2, found in Polaromonas sp. (strain JS666 / ATCC BAA-500).